Consider the following 328-residue polypeptide: Opticin (328 aa).

Positions 1-19 are cleaved as a signal peptide; that stretch reads MKFLAFLSLLSLVLQKAET. Asn-46 is a glycosylation site (N-linked (GlcNAc...) asparagine). Sulfotyrosine is present on Tyr-69. Residues Asn-80 and Asn-101 are each glycosylated (N-linked (GlcNAc...) asparagine). The region spanning 112 to 149 is the LRRNT domain; the sequence is LLNSQSSHGLPTCLVCVCLGSSVYCDDADLENIPPLPQ. LRR repeat units lie at residues 150–171, 174–195, 198–219, 244–265, 266–286, and 296–316; these read MTTY…DFKG, KLRR…ALRL, ALQD…PSGI, KLQF…LPLS, LRSL…TFCD, and QLED…PEAY. Cysteines 285 and 318 form a disulfide. The N-linked (GlcNAc...) asparagine glycan is linked to Asn-308.

Belongs to the small leucine-rich proteoglycan (SLRP) family. SLRP class III subfamily. Homodimer. In terms of processing, O-glycosylated. Sulfated on tyrosine residues. Post-translationally, proteolytically cleaved by MMP1, MMP2, MMP3, MMP7, MMP8, MMP9, ADAMTS4, and ADAMTS5. Proteolytically cleaved by MMP13. Expressed in cartilage (at protein level). Expressed in the vitreous collagen, inner limiting membrane, lens capsule, trabecular meshwork, anterior surface of the iris, the area adjacent to the nonpigmented ciliary epithelium, and weakly expressed in the retina of the eye (at protein level). Expressed in the nonpigmented ciliary epithelium of the eye.

Its subcellular location is the secreted. The protein localises to the extracellular space. It is found in the extracellular matrix. Its function is as follows. Inhibits angiogenesis in the vitreous humor of the eye, and therefore represses neovascularization. Binds collagen fibrils. May be involved in collagen fiber organization via regulation of other members of the small leucine-rich repeat proteoglycan superfamily. The polypeptide is Opticin (Optc) (Mus musculus (Mouse)).